The sequence spans 585 residues: Serine protease HtrA-like (585 aa).

The segment at 1–184 (MDNNKKQVIP…QPKDKDNDNT (184 aa)) is disordered. Positions 21-82 (YFHNVEREER…IHQQRDDKSY (62 aa)) are enriched in basic and acidic residues. The segment covering 84-94 (QKTLNQNNQMN) has biased composition (polar residues). The segment covering 95 to 113 (KSKDDDNKIGEESLHDVRV) has biased composition (basic and acidic residues). A compositionally biased stretch (polar residues) spans 114 to 124 (SSDTSTLPHQN). Basic and acidic residues predominate over residues 126–139 (SIKDYDDSGNESKQ). Over residues 151–175 (GVNSNHTEQDSRSTQPYSSKHSYSQ) the composition is skewed to polar residues. A helical membrane pass occupies residues 224–244 (MLIIIGIIVLLLILNAIFTTV). Active-site charge relay system residues include histidine 320, aspartate 350, and serine 435. The PDZ domain maps to 516–575 (GVLIGEVKENGLGDKAGLKKGDVIVELDGKKIEDNLRYRQVIYSHYDDQKTITAKIYRNG).

The protein belongs to the peptidase S1C family.

Its subcellular location is the cell membrane. This is Serine protease HtrA-like from Staphylococcus epidermidis (strain ATCC 35984 / DSM 28319 / BCRC 17069 / CCUG 31568 / BM 3577 / RP62A).